The sequence spans 413 residues: Peptidase T (413 aa).

H84 is a binding site for Zn(2+). The active site involves D86. A Zn(2+)-binding site is contributed by D146. The active-site Proton acceptor is E180. Residues E181, D203, and H385 each coordinate Zn(2+).

It belongs to the peptidase M20B family. Zn(2+) serves as cofactor.

The protein localises to the cytoplasm. The catalysed reaction is Release of the N-terminal residue from a tripeptide.. Cleaves the N-terminal amino acid of tripeptides. The polypeptide is Peptidase T (Limosilactobacillus fermentum (strain NBRC 3956 / LMG 18251) (Lactobacillus fermentum)).